Here is a 458-residue protein sequence, read N- to C-terminus: GTPase Der (458 aa).

2 consecutive EngA-type G domains span residues 4-169 (PSIA…PKDF) and 178-353 (VMMS…TQHR). GTP-binding positions include 10 to 17 (GRPNVGKS), 57 to 61 (DTGGL), 120 to 123 (NKCE), 184 to 191 (GRPNVGKS), 231 to 235 (DTAGI), and 296 to 299 (NKWD). The KH-like domain occupies 354 to 439 (MRVTTSVVNE…PIILLWRGKQ (86 aa)).

The protein belongs to the TRAFAC class TrmE-Era-EngA-EngB-Septin-like GTPase superfamily. EngA (Der) GTPase family. In terms of assembly, associates with the 50S ribosomal subunit.

In terms of biological role, GTPase that plays an essential role in the late steps of ribosome biogenesis. This is GTPase Der from Prochlorococcus marinus (strain MIT 9515).